A 140-amino-acid chain; its full sequence is Large-conductance mechanosensitive channel (140 aa).

The next 2 helical transmembrane spans lie at 14–34 (VMDL…TGSL) and 85–105 (GAFV…FLLV).

This sequence belongs to the MscL family. Homopentamer.

The protein localises to the cell inner membrane. Functionally, channel that opens in response to stretch forces in the membrane lipid bilayer. May participate in the regulation of osmotic pressure changes within the cell. The sequence is that of Large-conductance mechanosensitive channel from Sphingopyxis alaskensis (strain DSM 13593 / LMG 18877 / RB2256) (Sphingomonas alaskensis).